A 331-amino-acid polypeptide reads, in one-letter code: Quinone oxidoreductase (331 aa).

Ala-2 is subject to N-acetylalanine. Lys-23 carries the N6-acetyllysine modification. Position 35 is a phosphoserine (Ser-35). Residues Tyr-53, 158-161, and Gly-181 each bind NADP(+); that span reads SGGV. N6-acetyllysine is present on Lys-186. Residues His-200, Asn-231, 248–251, and 271–273 contribute to the NADP(+) site; these read VGCR and VSL. N6-succinyllysine is present on Lys-298.

It belongs to the zinc-containing alcohol dehydrogenase family. Quinone oxidoreductase subfamily. As to quaternary structure, homotetramer.

It is found in the cytoplasm. The enzyme catalyses 2 a quinone + NADPH + H(+) = 2 a 1,4-benzosemiquinone + NADP(+). Functionally, does not have alcohol dehydrogenase activity. Binds NADP and acts through a one-electron transfer process. Orthoquinones, such as 1,2-naphthoquinone or 9,10-phenanthrenequinone, are the best substrates (in vitro). May act in the detoxification of xenobiotics. Interacts with (AU)-rich elements (ARE) in the 3'-UTR of target mRNA species and enhances their stability. NADPH binding interferes with mRNA binding. In Mus musculus (Mouse), this protein is Quinone oxidoreductase (Cryz).